A 487-amino-acid polypeptide reads, in one-letter code: Multiple inositol polyphosphate phosphatase 1 (487 aa).

A signal peptide spans 1–30; sequence MLRAPGCLLRTSVAPAAALAAALLSSLARC. H89 is an active-site residue. 2 N-linked (GlcNAc...) asparagine glycosylation sites follow: N242 and N481. The Prevents secretion from ER signature appears at 484–487; sequence SDEL.

It belongs to the histidine acid phosphatase family. MINPP1 subfamily. N-glycosylated. In terms of tissue distribution, widely expressed with highest levels in kidney, liver, cerebellum and placenta.

It is found in the endoplasmic reticulum lumen. The protein localises to the secreted. The protein resides in the cell membrane. The enzyme catalyses 1D-myo-inositol hexakisphosphate + H2O = 1D-myo-inositol 1,2,4,5,6-pentakisphosphate + phosphate. The catalysed reaction is 1D-myo-inositol 1,2,4,5,6-pentakisphosphate + H2O = 1D-myo-inositol 1,2,5,6-tetrakisphosphate + phosphate. It catalyses the reaction 1D-myo-inositol 1,2,5,6-tetrakisphosphate + H2O = 1D-myo-inositol 1,2,6-trisphosphate + phosphate. It carries out the reaction 1D-myo-inositol 1,2,6-trisphosphate + H2O = 1D-myo-inositol 1,2-bisphosphate + phosphate. The enzyme catalyses 1D-myo-inositol 1,2-bisphosphate + H2O = 1D-myo-inositol 2-phosphate + phosphate. The catalysed reaction is 1D-myo-inositol hexakisphosphate + H2O = 1D-myo-inositol 1,2,3,5,6-pentakisphosphate + phosphate. It catalyses the reaction 1D-myo-inositol 1,2,3,5,6-pentakisphosphate + H2O = 1D-myo-inositol 1,2,3,6-tetrakisphosphate + phosphate. It carries out the reaction 1D-myo-inositol 1,2,3,6-tetrakisphosphate + H2O = 1D-myo-inositol 1,2,3-trisphosphate + phosphate. The enzyme catalyses 1D-myo-inositol 1,2,3-trisphosphate + H2O = 1D-myo-inositol 2,3-bisphosphate + phosphate. The catalysed reaction is 1D-myo-inositol 2,3-bisphosphate + H2O = 1D-myo-inositol 2-phosphate + phosphate. It catalyses the reaction 1D-myo-inositol 1,3,4,5,6-pentakisphosphate + H2O = 1D-myo-inositol 1,4,5,6-tetrakisphosphate + phosphate. It carries out the reaction 1D-myo-inositol 1,4,5,6-tetrakisphosphate + H2O = 1D-myo-inositol 1,4,5-trisphosphate + phosphate. The enzyme catalyses (2R)-2,3-bisphosphoglycerate + H2O = (2R)-2-phosphoglycerate + phosphate. In terms of biological role, multiple inositol polyphosphate phosphatase that hydrolyzes 1D-myo-inositol 1,3,4,5,6-pentakisphosphate (InsP5[2OH]) and 1D-myo-inositol hexakisphosphate (InsP6) to a range of less phosphorylated inositol phosphates. This regulates the availability of these various small molecule second messengers and metal chelators which control many aspects of cell physiology. Has a weak in vitro activity towards 1D-myo-inositol 1,4,5-trisphosphate which is unlikely to be physiologically relevant. By regulating intracellular inositol polyphosphates pools, which act as metal chelators, it may control the availability of intracellular calcium and iron, which are important for proper neuronal development and homeostasis. May have a dual substrate specificity, and function as a 2,3-bisphosphoglycerate 3-phosphatase hydrolyzing 2,3-bisphosphoglycerate to 2-phosphoglycerate. 2,3-bisphosphoglycerate (BPG) is formed as part of the Rapoport-Luebering glycolytic bypass and is a regulator of systemic oxygen homeostasis as the major allosteric effector of hemoglobin. In Homo sapiens (Human), this protein is Multiple inositol polyphosphate phosphatase 1.